The chain runs to 212 residues: Protein G1-like7 (212 aa).

Low complexity predominate over residues 1 to 22; sequence MDPSGPGPSSAAAGGAPAVAAA. Disordered regions lie at residues 1–34 and 148–212; these read MDPS…RYES and KARG…PSAS. One can recognise an ALOG domain in the interval 31–158; it reads RYESQKRRDW…ARGIPYEKKK (128 aa). The Nuclear localization signal motif lies at 156 to 160; sequence KKKRK. Residues 167–182 are compositionally biased toward low complexity; it reads PAGVEPSGSSSAAAAA. The span at 183-194 shows a compositional bias: gly residues; the sequence is AGGGDAGSGGGA. Over residues 195-212 the composition is skewed to low complexity; the sequence is AATTTAQPGGSGTAPSAS.

This sequence belongs to the plant homeotic and developmental regulators ALOG protein family.

The protein localises to the nucleus. Its function is as follows. Probable transcription regulator that acts as a developmental regulator by promoting cell growth in response to light. The sequence is that of Protein G1-like7 (G1L7) from Oryza sativa subsp. japonica (Rice).